We begin with the raw amino-acid sequence, 467 residues long: Glutamate--tRNA ligase (467 aa).

The 'HIGH' region signature appears at 10–20 (PSPTGYLHVGG). The short motif at 238 to 242 (RLSKR) is the 'KMSKS' region element. K241 provides a ligand contact to ATP.

This sequence belongs to the class-I aminoacyl-tRNA synthetase family. Glutamate--tRNA ligase type 1 subfamily. As to quaternary structure, monomer.

It is found in the cytoplasm. The enzyme catalyses tRNA(Glu) + L-glutamate + ATP = L-glutamyl-tRNA(Glu) + AMP + diphosphate. Its function is as follows. Catalyzes the attachment of glutamate to tRNA(Glu) in a two-step reaction: glutamate is first activated by ATP to form Glu-AMP and then transferred to the acceptor end of tRNA(Glu). In Citrifermentans bemidjiense (strain ATCC BAA-1014 / DSM 16622 / JCM 12645 / Bem) (Geobacter bemidjiensis), this protein is Glutamate--tRNA ligase.